The following is a 279-amino-acid chain: Lyso-glycine lipid O-acyltransferase (279 aa).

This sequence belongs to the O-acyltransferase GlsA family.

It catalyses the reaction a lyso-glycine lipid + a fatty acyl-[ACP] = a glycine lipid + holo-[ACP]. The catalysed reaction is N-[(3R)-3-hydroxyhexadecanoyl]-glycine + hexadecanoyl-[ACP] = N-[(3R)-3-(hexadecanoyloxy)hexadecanoyl]-glycine + holo-[ACP]. It participates in lipid metabolism. In terms of biological role, is involved in the production of glycine lipids (GL), which are phosphorus-free membrane lipids. Catalyzes the second step of GL biosynthesis, i.e. the O-acylation of the hydroxyl group of lyso-glycine lipids, resulting in the production of the mature diacylated glycine lipids. The polypeptide is Lyso-glycine lipid O-acyltransferase (Phocaeicola vulgatus (strain ATCC 8482 / DSM 1447 / JCM 5826 / CCUG 4940 / NBRC 14291 / NCTC 11154) (Bacteroides vulgatus)).